A 400-amino-acid chain; its full sequence is Inositol polyphosphate 1-phosphatase (400 aa).

Asp54 contacts Li(+). Glu79 contributes to the Mg(2+) binding site. Glu80 is a binding site for Li(+). Residues Asp153 and Ile155 each contribute to the Mg(2+) site. The 1D-myo-inositol 1,4-bisphosphate site is built by Asp156, Ser157, and Thr158. The segment covering Ser238–Gly257 has biased composition (polar residues). The interval Ser238–Ser258 is disordered. 1D-myo-inositol 1,4-bisphosphate-binding residues include Ser268, Lys270, Gly290, Ala291, Lys294, and Thr312. Residue Asp317 participates in Mg(2+) binding. Ser318 carries the post-translational modification Phosphoserine.

It belongs to the inositol monophosphatase superfamily. As to quaternary structure, monomer. The cofactor is Mg(2+).

It carries out the reaction 1D-myo-inositol 1,4-bisphosphate + H2O = 1D-myo-inositol 4-phosphate + phosphate. The enzyme catalyses 1D-myo-inositol 1,3,4-trisphosphate + H2O = 1D-myo-inositol 3,4-bisphosphate + phosphate. Its pathway is signal transduction; phosphatidylinositol signaling pathway. Its activity is regulated as follows. Inhibited by Li(+). In terms of biological role, mg(2+)-dependent phosphatase that catalyzes the hydrolysis of the 1-position phosphate from inositol 1,4-bisphosphate and inositol 1,3,4-trisphosphate and participates in inositol phosphate metabolism. The chain is Inositol polyphosphate 1-phosphatase from Bos taurus (Bovine).